The following is a 366-amino-acid chain: GTP cyclohydrolase 1 type 2 homolog (366 aa).

A divalent metal cation-binding residues include His64, His65, Asp102, His326, and Glu329.

This sequence belongs to the GTP cyclohydrolase I type 2/NIF3 family. Homohexamer.

The protein is GTP cyclohydrolase 1 type 2 homolog of Staphylococcus epidermidis (strain ATCC 35984 / DSM 28319 / BCRC 17069 / CCUG 31568 / BM 3577 / RP62A).